Here is an 83-residue protein sequence, read N- to C-terminus: Subtilisin-chymotrypsin inhibitor CI-1A (83 aa).

The segment at 1–24 (MSSMEGSVLKYPEPTEGSIGASSA) is disordered.

The protein belongs to the protease inhibitor I13 (potato type I serine protease inhibitor) family.

Functionally, inhibits both subtilisin and chymotrypsin. This is Subtilisin-chymotrypsin inhibitor CI-1A from Hordeum vulgare (Barley).